Consider the following 184-residue polypeptide: RNA polymerase sigma factor HrpL (184 aa).

The Polymerase core binding motif lies at 49 to 62 (DILQCVFLEALRNE). A DNA-binding region (H-T-H motif) is located at residues 151–170 (YQETANTLGVPIGTVRSRLS).

This sequence belongs to the sigma-70 factor family. ECF subfamily.

Functionally, sigma factors are initiation factors that promote the attachment of RNA polymerase to specific initiation sites and are then released. This sigma factor is involved in the activation of hprD as well as other hrp loci which are involved in plant pathogenicity, hrmA and avr genes. This Pseudomonas syringae pv. syringae protein is RNA polymerase sigma factor HrpL (hrpL).